The chain runs to 252 residues: Phosphoglycolate phosphatase (252 aa).

Catalysis depends on D13, which acts as the Nucleophile. Mg(2+) is bound by residues D13, D15, and D192.

The protein belongs to the HAD-like hydrolase superfamily. CbbY/CbbZ/Gph/YieH family. Monomer. It depends on Mg(2+) as a cofactor. Requires chloride as cofactor.

The catalysed reaction is 2-phosphoglycolate + H2O = glycolate + phosphate. The protein operates within organic acid metabolism; glycolate biosynthesis; glycolate from 2-phosphoglycolate: step 1/1. Specifically catalyzes the dephosphorylation of 2-phosphoglycolate. Is involved in the dissimilation of the intracellular 2-phosphoglycolate formed during the DNA repair of 3'-phosphoglycolate ends, a major class of DNA lesions induced by oxidative stress. This is Phosphoglycolate phosphatase from Shigella sonnei (strain Ss046).